The chain runs to 71 residues: Conotoxin ba5b (71 aa).

The first 19 residues, 1-19, serve as a signal peptide directing secretion; it reads MLCLPVFITLLLLVSPSAA. The propeptide occupies 20-52; the sequence is LPVESELQRDLTQDSPKDFRIREPLLLSKMFDR. Cystine bridges form between Cys54–Cys63 and Cys55–Cys64. Cys64 carries the post-translational modification Cysteine amide. Residues 66–71 constitute a propeptide that is removed on maturation; it reads RYQRGS.

Belongs to the conotoxin T superfamily. As to expression, expressed by the venom duct.

Its subcellular location is the secreted. This Conus bayani (Bayan's cone) protein is Conotoxin ba5b.